A 719-amino-acid polypeptide reads, in one-letter code: DNA ligase (719 aa).

Residues 42 to 46, 92 to 93, and glutamate 126 contribute to the NAD(+) site; these read DAAYD and SL. Lysine 128 (N6-AMP-lysine intermediate) is an active-site residue. Residues arginine 149, glutamate 185, lysine 301, and lysine 325 each contribute to the NAD(+) site. Residues cysteine 430, cysteine 433, cysteine 448, and cysteine 454 each contribute to the Zn(2+) site. One can recognise a BRCT domain in the interval 640–719; it reads ATGSPVEGKT…DDWFKLVGED (80 aa).

The protein belongs to the NAD-dependent DNA ligase family. LigA subfamily. The cofactor is Mg(2+). Mn(2+) serves as cofactor.

It carries out the reaction NAD(+) + (deoxyribonucleotide)n-3'-hydroxyl + 5'-phospho-(deoxyribonucleotide)m = (deoxyribonucleotide)n+m + AMP + beta-nicotinamide D-nucleotide.. In terms of biological role, DNA ligase that catalyzes the formation of phosphodiester linkages between 5'-phosphoryl and 3'-hydroxyl groups in double-stranded DNA using NAD as a coenzyme and as the energy source for the reaction. It is essential for DNA replication and repair of damaged DNA. The chain is DNA ligase from Brucella melitensis biotype 2 (strain ATCC 23457).